Here is a 389-residue protein sequence, read N- to C-terminus: Acetylornithine deacetylase (389 aa).

Histidine 85 serves as a coordination point for Zn(2+). Aspartate 87 is an active-site residue. Position 117 (aspartate 117) interacts with Zn(2+). Residue glutamate 149 is part of the active site. Zn(2+) is bound by residues glutamate 150, glutamate 174, and histidine 360.

This sequence belongs to the peptidase M20A family. ArgE subfamily. In terms of assembly, homodimer. Requires Zn(2+) as cofactor. Co(2+) is required as a cofactor. Glutathione serves as cofactor.

Its subcellular location is the cytoplasm. It carries out the reaction N(2)-acetyl-L-ornithine + H2O = L-ornithine + acetate. It participates in amino-acid biosynthesis; L-arginine biosynthesis; L-ornithine from N(2)-acetyl-L-ornithine (linear): step 1/1. Catalyzes the hydrolysis of the amide bond of N(2)-acetylated L-amino acids. Cleaves the acetyl group from N-acetyl-L-ornithine to form L-ornithine, an intermediate in L-arginine biosynthesis pathway, and a branchpoint in the synthesis of polyamines. The chain is Acetylornithine deacetylase from Yersinia pseudotuberculosis serotype O:1b (strain IP 31758).